We begin with the raw amino-acid sequence, 167 residues long: uncharacterized protein (167 aa).

The N-acetyltransferase domain occupies 1-148 (MLIRVEIPID…SAFQVHRLAD (148 aa)).

This sequence belongs to the acetyltransferase family.

This is an uncharacterized protein from Escherichia coli O157:H7.